The sequence spans 406 residues: Multidrug resistance protein MdtG (406 aa).

11 helical membrane passes run 16–36 (VAWL…PFLP), 56–76 (LVFS…GGLA), 90–110 (LGMA…QFLL), 113–133 (ALLG…ATQV), 144–164 (TLST…GLLA), 171–191 (PVFF…LFFT), 222–242 (LFVT…ILTL), 254–274 (IAFI…LSAP), 288–308 (ILIT…FVQT), 317–337 (FLLG…LVYN), and 376–396 (AVFC…WNSL).

It belongs to the major facilitator superfamily. DHA1 family. MdtG (TC 2.A.1.2.20) subfamily.

It localises to the cell inner membrane. This Citrobacter koseri (strain ATCC BAA-895 / CDC 4225-83 / SGSC4696) protein is Multidrug resistance protein MdtG.